The primary structure comprises 391 residues: Cold-shock protein CS120 (391 aa).

17 repeat units span residues 9-31, 49-62, 72-94, 95-108, 115-128, 135-148, 156-178, 179-192, 199-212, 220-242, 243-256, 263-276, 284-306, 307-320, 327-340, 350-363, and 374-391. The interval 9–391 is 6 X 23 AA approximate repeats; sequence GEKKGIMEKI…KIKDKLPGQH (383 aa). The segment covering 21 to 33 has biased composition (basic and acidic residues); that stretch reads KLPGGHGDHKETA. A disordered region spans residues 21–391; that stretch reads KLPGGHGDHK…KIKDKLPGQH (371 aa). Low complexity predominate over residues 34 to 59; the sequence is GTHGHPGTATHGAPATGGAYGQQGHA. Residues 49 to 363 form an 11 X 14 AA approximate repeats region; sequence TGGAYGQQGH…HGQHGHTGTT (315 aa). Basic and acidic residues predominate over residues 70–92; sequence HAGEKKGVMENIKDKLPGGHQDH. Positions 93-145 are enriched in low complexity; it reads QQTGGTYGQQGHTGTATHGTPATGGTYGQQGHTGTATHGTPATGGTYGEQGHT. Positions 155–176 are enriched in basic and acidic residues; sequence TGEKKGVMENIKEKLPGGHGDH. Positions 177–196 are enriched in low complexity; sequence QQTGGTYGQQGHTGTATHGT. A compositionally biased stretch (basic and acidic residues) spans 219-240; sequence TGEKKGVMENIKDKLPGGHGDH. 2 stretches are compositionally biased toward low complexity: residues 241–260 and 272–282; these read QQTG…TQGT and HTGMTGAGTHS. Over residues 283–304 the composition is skewed to basic and acidic residues; that stretch reads TGEKKGVMENIKEKLPGGHSDH. Low complexity-rich tracts occupy residues 305-324 and 333-351; these read QQTG…THGT and QHGH…TATG. A compositionally biased stretch (gly residues) spans 361-372; the sequence is GTTGTGTHGSDG. The segment covering 373 to 391 has biased composition (basic and acidic residues); sequence IGEKKSLMDKIKDKLPGQH.

Belongs to the plant dehydrin family.

Its function is as follows. May reduce intracellular freezing damage during winter by hydrogen-bonding to the lattice of the nascent ice crystals, thus modifying the structure and/or propagation of ice crystals. The polypeptide is Cold-shock protein CS120 (CS120) (Triticum aestivum (Wheat)).